Here is a 400-residue protein sequence, read N- to C-terminus: Subtilisin-like protease 7 (400 aa).

The N-terminal stretch at 1–20 is a signal peptide; sequence MGFITKAIPLALAAASVING. The propeptide occupies 21 to 119; sequence AEIMETRAGV…IERDARVQIN (99 aa). The Inhibitor I9 domain occupies 36 to 118; that stretch reads KYIVVMNDGM…YIERDARVQI (83 aa). An N-linked (GlcNAc...) asparagine glycan is attached at asparagine 58. The region spanning 129–400 is the Peptidase S8 domain; it reads SWGLARVGSK…SKLINNGSGM (272 aa). Residues aspartate 161 and histidine 192 each act as charge relay system in the active site. 2 N-linked (GlcNAc...) asparagine glycosylation sites follow: asparagine 222 and asparagine 252. Serine 346 acts as the Charge relay system in catalysis. Asparagine 396 carries N-linked (GlcNAc...) asparagine glycosylation.

This sequence belongs to the peptidase S8 family.

Its subcellular location is the secreted. Functionally, secreted subtilisin-like serine protease with keratinolytic activity that contributes to pathogenicity. In Arthroderma benhamiae (Trichophyton mentagrophytes), this protein is Subtilisin-like protease 7 (SUB7).